The sequence spans 203 residues: Protein GrpE (203 aa).

The segment at M1–R38 is disordered.

This sequence belongs to the GrpE family. In terms of assembly, homodimer.

It is found in the cytoplasm. Its function is as follows. Participates actively in the response to hyperosmotic and heat shock by preventing the aggregation of stress-denatured proteins, in association with DnaK and GrpE. It is the nucleotide exchange factor for DnaK and may function as a thermosensor. Unfolded proteins bind initially to DnaJ; upon interaction with the DnaJ-bound protein, DnaK hydrolyzes its bound ATP, resulting in the formation of a stable complex. GrpE releases ADP from DnaK; ATP binding to DnaK triggers the release of the substrate protein, thus completing the reaction cycle. Several rounds of ATP-dependent interactions between DnaJ, DnaK and GrpE are required for fully efficient folding. The sequence is that of Protein GrpE from Paramagnetospirillum magneticum (strain ATCC 700264 / AMB-1) (Magnetospirillum magneticum).